Here is a 194-residue protein sequence, read N- to C-terminus: Histone H1.0 (194 aa).

N-acetylmethionine is present on Met1. The segment at 1–26 (MTENSTSTPAAKPKRAKAAKKSTDHP) is disordered. An N-acetylthreonine; in Histone H1.0, N-terminally processed modification is found at Thr2. In terms of domain architecture, H15 spans 24–97 (DHPKYSDMIV…GASGSFRLAK (74 aa)). Arg42 is modified (citrulline). The disordered stretch occupies residues 86 to 194 (GVGASGSFRL…SSAKRASKKK (109 aa)). An ADP-ribosylserine modification is found at Ser104. Residues 105 to 194 (VAFKKTKKEV…SSAKRASKKK (90 aa)) show a composition bias toward basic residues.

The protein belongs to the histone H1/H5 family. ADP-ribosylated on Ser-104 in response to DNA damage.

It is found in the nucleus. The protein localises to the chromosome. Its function is as follows. Histones H1 are necessary for the condensation of nucleosome chains into higher-order structures. The histones H1.0 are found in cells that are in terminal stages of differentiation or that have low rates of cell division. This chain is Histone H1.0 (H1-0), found in Rattus norvegicus (Rat).